A 515-amino-acid polypeptide reads, in one-letter code: Penton protein (515 aa).

The disordered stretch occupies residues 1–25; it reads MYRSLRPPTSIPPPPPSGPSPYPAM. Residues 9 to 22 are compositionally biased toward pro residues; it reads TSIPPPPPSGPSPY.

It belongs to the adenoviridae penton family. As to quaternary structure, interacts with the fiber protein (via N-terminal tail region). Interacts with the capsid vertex protein; this interaction binds the penton base to neighboring peripentonal hexons.

The protein resides in the virion. Its subcellular location is the host nucleus. Functionally, major capsid protein that self-associates to form penton base pentamers, each in the shape of a pentagon, situated at the 12 vertices of the pseudo T=25 capsid. Involved in virus secondary attachment to host cell after initial attachment by the fiber protein, and in endocytosis of virions. As the virus enters the host cell, penton proteins are shed concomitant with virion acidification in the endosome. The chain is Penton protein from Galliformes (FAdV-1).